We begin with the raw amino-acid sequence, 856 residues long: Envelope glycoprotein gp160 (856 aa).

The signal sequence occupies residues 1-31; it reads MKVKGIQGNWQNWWKWGTLILGLVIICSAAE. Topologically, residues 32-684 are extracellular; it reads NLWVTVYYGV…ISNWLWYIKI (653 aa). Cysteine 53 and cysteine 73 are oxidised to a cystine. N-linked (GlcNAc...) asparagine; by host glycosylation is found at asparagine 87, asparagine 132, asparagine 138, asparagine 152, asparagine 156, asparagine 183, and asparagine 198. 5 disulfide bridges follow: cysteine 118/cysteine 206, cysteine 125/cysteine 197, cysteine 130/cysteine 153, cysteine 219/cysteine 248, and cysteine 229/cysteine 240. The interval 130–152 is V1; it reads CHNITIKDNNTNVDTEMKEEIKN. The interval 153–197 is V2; it reads CSYNMTTELRDKQRKIYSLFYRLDIVPIGGNSSNGDSSKYRLINC. Asparagine 242, asparagine 263, asparagine 277, asparagine 294, asparagine 302, asparagine 332, asparagine 339, asparagine 355, and asparagine 364 each carry an N-linked (GlcNAc...) asparagine; by host glycan. Residues 297–330 form a V3 region; that stretch reads CMRPNNNTRKSISIGPGRAFFATGDIIGDIRQAH. Cysteine 297 and cysteine 331 are joined by a disulfide. Residues 365-375 are CD4-binding loop; sequence SSGGDVEITTH. 2 disulfides stabilise this stretch: cysteine 379/cysteine 445 and cysteine 386/cysteine 418. The interval 386-418 is V4; the sequence is CNTSGLFNGTWLNGTSNNTWKIDTVNDTIILPC. N-linked (GlcNAc...) asparagine; by host glycosylation is found at asparagine 387, asparagine 393, asparagine 398, asparagine 402, asparagine 411, asparagine 448, asparagine 461, asparagine 462, and asparagine 465. 2 V5 regions span residues 461–471 and 463–471; these read NNTSNETFRPG and TSNETFRPG. The tract at residues 512-532 is fusion peptide; sequence AIGMGAFFLGFLGAAGSTMGA. The immunosuppression stretch occupies residues 574–592; it reads KQLQARILAVERYLKDQQL. A disulfide bond links cysteine 598 and cysteine 604. Asparagine 611, asparagine 616, and asparagine 637 each carry an N-linked (GlcNAc...) asparagine; by host glycan. Residues 633-667 adopt a coiled-coil conformation; it reads KEVSNYTQVIYNLIEESQTQQEINERDLLALDKWA. The interval 662–683 is MPER; binding to GalCer; sequence ALDKWANLWNWFDISNWLWYIK. The helical transmembrane segment at 685–705 threads the bilayer; the sequence is FIMIVGGLIGLRIVFAVLSII. Over 706–856 the chain is Cytoplasmic; sequence NRVRQGYSPL…IRQGLERALL (151 aa). The short motif at 712 to 715 is the YXXL motif; contains endocytosis signal element; the sequence is YSPL. The disordered stretch occupies residues 720–742; sequence LTHHQREPDRPERIEEGGGEQDR. Over residues 723 to 742 the composition is skewed to basic and acidic residues; sequence HQREPDRPERIEEGGGEQDR. Residue cysteine 764 is the site of S-palmitoyl cysteine; by host attachment. A Di-leucine internalization motif motif is present at residues 855–856; sequence LL.

It belongs to the HIV-1 env protein family. The mature envelope protein (Env) consists of a homotrimer of non-covalently associated gp120-gp41 heterodimers. The resulting complex protrudes from the virus surface as a spike. There seems to be as few as 10 spikes on the average virion. Interacts with host CD4, CCR5 and CXCR4. Gp120 also interacts with the C-type lectins CD209/DC-SIGN and CLEC4M/DC-SIGNR (collectively referred to as DC-SIGN(R)). Gp120 and gp41 interact with GalCer. Gp120 interacts with host ITGA4/ITGB7 complex; on CD4+ T-cells, this interaction results in rapid activation of integrin ITGAL/LFA-1, which facilitates efficient cell-to-cell spreading of HIV-1. Gp120 interacts with cell-associated heparan sulfate; this interaction increases virus infectivity on permissive cells and may be involved in infection of CD4- cells. In terms of assembly, the mature envelope protein (Env) consists of a homotrimer of non-covalently associated gp120-gp41 heterodimers. The resulting complex protrudes from the virus surface as a spike. There seems to be as few as 10 spikes on the average virion. Highly glycosylated by host. The high number of glycan on the protein is reffered to as 'glycan shield' because it contributes to hide protein sequence from adaptive immune system. In terms of processing, palmitoylation of the transmembrane protein and of Env polyprotein (prior to its proteolytic cleavage) is essential for their association with host cell membrane lipid rafts. Palmitoylation is therefore required for envelope trafficking to classical lipid rafts, but not for viral replication. Post-translationally, specific enzymatic cleavages in vivo yield mature proteins. Envelope glycoproteins are synthesized as an inactive precursor that is heavily N-glycosylated and processed likely by host cell furin in the Golgi to yield the mature SU and TM proteins. The cleavage site between SU and TM requires the minimal sequence [KR]-X-[KR]-R. About 2 of the 9 disulfide bonds of gp41 are reduced by P4HB/PDI, following binding to CD4 receptor.

Its subcellular location is the virion membrane. It localises to the host cell membrane. It is found in the host endosome membrane. Oligomerizes in the host endoplasmic reticulum into predominantly trimers. In a second time, gp160 transits in the host Golgi, where glycosylation is completed. The precursor is then proteolytically cleaved in the trans-Golgi and thereby activated by cellular furin or furin-like proteases to produce gp120 and gp41. Functionally, attaches the virus to the host lymphoid cell by binding to the primary receptor CD4. This interaction induces a structural rearrangement creating a high affinity binding site for a chemokine coreceptor like CXCR4 and/or CCR5. Acts as a ligand for CD209/DC-SIGN and CLEC4M/DC-SIGNR, which are respectively found on dendritic cells (DCs), and on endothelial cells of liver sinusoids and lymph node sinuses. These interactions allow capture of viral particles at mucosal surfaces by these cells and subsequent transmission to permissive cells. HIV subverts the migration properties of dendritic cells to gain access to CD4+ T-cells in lymph nodes. Virus transmission to permissive T-cells occurs either in trans (without DCs infection, through viral capture and transmission), or in cis (following DCs productive infection, through the usual CD4-gp120 interaction), thereby inducing a robust infection. In trans infection, bound virions remain infectious over days and it is proposed that they are not degraded, but protected in non-lysosomal acidic organelles within the DCs close to the cell membrane thus contributing to the viral infectious potential during DCs' migration from the periphery to the lymphoid tissues. On arrival at lymphoid tissues, intact virions recycle back to DCs' cell surface allowing virus transmission to CD4+ T-cells. Its function is as follows. Acts as a class I viral fusion protein. Under the current model, the protein has at least 3 conformational states: pre-fusion native state, pre-hairpin intermediate state, and post-fusion hairpin state. During fusion of viral and target intracellular membranes, the coiled coil regions (heptad repeats) assume a trimer-of-hairpins structure, positioning the fusion peptide in close proximity to the C-terminal region of the ectodomain. The formation of this structure appears to drive apposition and subsequent fusion of viral and target cell membranes. Complete fusion occurs in host cell endosomes and is dynamin-dependent, however some lipid transfer might occur at the plasma membrane. The virus undergoes clathrin-dependent internalization long before endosomal fusion, thus minimizing the surface exposure of conserved viral epitopes during fusion and reducing the efficacy of inhibitors targeting these epitopes. Membranes fusion leads to delivery of the nucleocapsid into the cytoplasm. This is Envelope glycoprotein gp160 from Homo sapiens (Human).